The chain runs to 314 residues: DNA-directed RNA polymerase subunit alpha (314 aa).

Residues methionine 1 to threonine 228 are alpha N-terminal domain (alpha-NTD). Residues lysine 245–aspartate 314 are alpha C-terminal domain (alpha-CTD).

This sequence belongs to the RNA polymerase alpha chain family. In terms of assembly, homodimer. The RNAP catalytic core consists of 2 alpha, 1 beta, 1 beta' and 1 omega subunit. When a sigma factor is associated with the core the holoenzyme is formed, which can initiate transcription.

The enzyme catalyses RNA(n) + a ribonucleoside 5'-triphosphate = RNA(n+1) + diphosphate. DNA-dependent RNA polymerase catalyzes the transcription of DNA into RNA using the four ribonucleoside triphosphates as substrates. The protein is DNA-directed RNA polymerase subunit alpha of Limosilactobacillus reuteri (strain DSM 20016) (Lactobacillus reuteri).